Reading from the N-terminus, the 321-residue chain is 6-phosphogluconolactonase-like protein 1 (321 aa).

The interval 36–85 (GKVSRSTQMSGTSLNGNGNTESKTMERVNSVRSNASSRGGSEDGATKKLK) is disordered. Residues 39-57 (SRSTQMSGTSLNGNGNTES) show a composition bias toward polar residues. Residues 63–74 (VNSVRSNASSRG) show a composition bias toward low complexity. Phosphoserine occurs at positions 65 and 68. Over residues 75-85 (GSEDGATKKLK) the composition is skewed to basic and acidic residues. Thr-320 carries the phosphothreonine modification.

This sequence belongs to the glucosamine/galactosamine-6-phosphate isomerase family. 6-phosphogluconolactonase subfamily.

It localises to the cytoplasm. Its subcellular location is the nucleus. May be involved in regulation of tRNA subcellular distribution. The sequence is that of 6-phosphogluconolactonase-like protein 1 (SOL1) from Saccharomyces cerevisiae (strain ATCC 204508 / S288c) (Baker's yeast).